A 511-amino-acid polypeptide reads, in one-letter code: Centrosomal protein CCDC61 (511 aa).

Methionine 1 carries the N-acetylmethionine modification. Residues 1–143 (MDQPAGLQVD…PLPLPYQGKP (143 aa)) are head domain. Coiled coils occupy residues 176–203 (IWHLREQVTRLTSEKRELEAQLGRSREE) and 246–273 (SRRLAKELEEVKASERNLRARLKTLNSE). Residue threonine 283 is modified to Phosphothreonine. Disordered regions lie at residues 284–413 (LPPV…DSFR) and 429–476 (SHSV…GGWV). Residues 290–302 (REGRASSSRERST) are compositionally biased toward basic and acidic residues. Phosphoserine occurs at positions 330 and 332. Low complexity predominate over residues 360–369 (KQQQQQRNRM). Residues serine 371 and serine 374 each carry the phosphoserine modification. Positions 433–442 (SRSRRCRGRG) are enriched in basic residues. Serine 446 is modified (phosphoserine). The span at 449-458 (PWSRSKTKST) shows a compositional bias: polar residues. Serine 472 carries the phosphoserine modification.

Belongs to the CCDC61 family. In terms of assembly, forms homodimers (via head domain). Interacts with CEP170. Interacts with PCM1 and CEP131. Binds tubulin.

Its subcellular location is the cytoplasm. The protein resides in the cytoskeleton. It is found in the microtubule organizing center. The protein localises to the centrosome. It localises to the centriolar satellite. Its subcellular location is the cilium basal body. Microtubule-binding centrosomal protein required for centriole cohesion, independently of the centrosome-associated protein/CEP250 and rootletin/CROCC linker. In interphase, required for anchoring microtubule at the mother centriole subdistal appendages and for centrosome positioning. During mitosis, may be involved in spindle assembly and chromatin alignment by regulating the organization of spindle microtubules into a symmetrical structure. Plays a non-essential role in ciliogenesis. The chain is Centrosomal protein CCDC61 from Mus musculus (Mouse).